We begin with the raw amino-acid sequence, 291 residues long: Acetyl-coenzyme A carboxylase carboxyl transferase subunit beta (291 aa).

One can recognise a CoA carboxyltransferase N-terminal domain in the interval 29–291 (LWSKCPECGE…MHQQPAAVSA (263 aa)). Positions 33, 36, 52, and 55 each coordinate Zn(2+). The segment at 33–55 (CPECGEVVYRKDLIANASVCASC) adopts a C4-type zinc-finger fold.

It belongs to the AccD/PCCB family. In terms of assembly, acetyl-CoA carboxylase is a heterohexamer composed of biotin carboxyl carrier protein (AccB), biotin carboxylase (AccC) and two subunits each of ACCase subunit alpha (AccA) and ACCase subunit beta (AccD). Zn(2+) serves as cofactor.

Its subcellular location is the cytoplasm. The enzyme catalyses N(6)-carboxybiotinyl-L-lysyl-[protein] + acetyl-CoA = N(6)-biotinyl-L-lysyl-[protein] + malonyl-CoA. Its pathway is lipid metabolism; malonyl-CoA biosynthesis; malonyl-CoA from acetyl-CoA: step 1/1. Its function is as follows. Component of the acetyl coenzyme A carboxylase (ACC) complex. Biotin carboxylase (BC) catalyzes the carboxylation of biotin on its carrier protein (BCCP) and then the CO(2) group is transferred by the transcarboxylase to acetyl-CoA to form malonyl-CoA. This is Acetyl-coenzyme A carboxylase carboxyl transferase subunit beta from Synechococcus sp. (strain RCC307).